The sequence spans 314 residues: Olfactory receptor 5G29 (314 aa).

Residues 1-25 are Extracellular-facing; that stretch reads MEEKNQTIVMEFFFLGLTDHLYQKI. N-linked (GlcNAc...) asparagine glycosylation is present at N5. Residues 26–46 traverse the membrane as a helical segment; the sequence is ALFITILFVYLVTLGGNLGMI. Residues 47–54 are Cytoplasmic-facing; sequence TLIWADPR. A helical transmembrane segment spans residues 55 to 75; sequence LHTPMYFFLSHLSFVDMCSSS. Over 76–99 the chain is Extracellular; that stretch reads SIAPKMLCDIFAEEKRISFMGCAA. C97 and C189 are joined by a disulfide. A helical transmembrane segment spans residues 100–120; it reads QMWFFGFFVGTECFLLASMAY. The Cytoplasmic segment spans residues 121–133; sequence DRYTAICKPLLYT. A helical membrane pass occupies residues 134 to 154; that stretch reads LLMSQRVCVHLVVGPYVFAII. The Extracellular segment spans residues 155-196; sequence NITTHTTLAFCLPFCGSNTINHFFCDVSPLLSLACADSWVNK. Residues 197–217 form a helical membrane-spanning segment; the sequence is VVLFVLSGAIGVFSGLIIIVS. Topologically, residues 218-237 are cytoplasmic; that stretch reads YVSILMTIFKIQTADGKQKA. A helical transmembrane segment spans residues 238–258; sequence FSTCSSHLSAVSILYGTLFFI. Over 259–271 the chain is Extracellular; the sequence is YVRPSASFSLNIN. A helical membrane pass occupies residues 272–292; sequence KMISLFYTVVIPMLNPLIYSL. Residues 293–312 are Cytoplasmic-facing; sequence RNKEVKGAFRRKVQKKHFPA.

Belongs to the G-protein coupled receptor 1 family.

It is found in the cell membrane. Its function is as follows. Potential odorant receptor. The sequence is that of Olfactory receptor 5G29 from Mus musculus (Mouse).